The chain runs to 332 residues: 2,3-diketo-L-gulonate reductase (332 aa).

Catalysis depends on His-44, which acts as the Proton donor. NAD(+)-binding positions include Ile-168–Ser-174, Trp-224–Lys-225, and Gly-304–Glu-306.

This sequence belongs to the LDH2/MDH2 oxidoreductase family. DlgD subfamily. In terms of assembly, homodimer.

The protein resides in the cytoplasm. The enzyme catalyses 3-dehydro-L-gulonate + NAD(+) = 2,3-dioxo-L-gulonate + NADH + H(+). It catalyses the reaction 3-dehydro-L-gulonate + NADP(+) = 2,3-dioxo-L-gulonate + NADPH + H(+). Functionally, catalyzes the reduction of 2,3-diketo-L-gulonate in the presence of NADH, to form 3-keto-L-gulonate. In Escherichia coli O139:H28 (strain E24377A / ETEC), this protein is 2,3-diketo-L-gulonate reductase.